The chain runs to 470 residues: Putative multidrug resistance protein MdtD (470 aa).

The Periplasmic portion of the chain corresponds to 1 to 11; it reads MTELPDNTRWQ. The chain crosses the membrane as a helical span at residues 12 to 32; it reads LWIVALGFFMQSLDTTIVNTA. Residues 33–48 lie on the Cytoplasmic side of the membrane; the sequence is LPSMAKSLGESPLHMH. A helical transmembrane segment spans residues 49-69; that stretch reads MVVVSYVLTVAVMLPASGWLA. Residues 70 to 76 lie on the Periplasmic side of the membrane; it reads DKIGVRN. The helical transmembrane segment at 77-97 threads the bilayer; it reads IFFAAIVLFTLGSLFCALSGT. Over 98–101 the chain is Cytoplasmic; the sequence is LNQL. A helical membrane pass occupies residues 102-124; that stretch reads VLARVLQGVGGAMMVPVGRLTVM. Residues 125-137 lie on the Periplasmic side of the membrane; the sequence is KIVPRAQYMAAMT. The helical transmembrane segment at 138-158 threads the bilayer; the sequence is FVTLPGQIGPLLGPALGGVLV. Topologically, residues 159 to 164 are cytoplasmic; that stretch reads EYASWH. A helical transmembrane segment spans residues 165-185; it reads WIFLINIPVGIVGAMATFMLM. At 186-196 the chain is on the periplasmic side; the sequence is PNYTIETRRFD. The helical transmembrane segment at 197–217 threads the bilayer; it reads LPGFLLLAIGMAVLTLALDGS. Residues 218–221 are Cytoplasmic-facing; the sequence is KSMG. A helical membrane pass occupies residues 222 to 242; sequence ISPWTLAGLAAGGAAAILLYL. Residues 243–262 lie on the Periplasmic side of the membrane; the sequence is LHAKKNSGALFSLRLFCTPT. A helical transmembrane segment spans residues 263-283; the sequence is FSLGLLGSFAGRIGSGMLPFM. Residues 284–285 are Cytoplasmic-facing; that stretch reads TP. The chain crosses the membrane as a helical span at residues 286–306; it reads VFLQIGLGFSPFHAGLMMIPM. Residues 307–341 are Periplasmic-facing; it reads VLGSMGMKRIVVQIVNRFGYRRVLVATTLGLALVS. Residues 342-362 form a helical membrane-spanning segment; sequence LLFMSVALLGWYYLLPLVLLL. Over 363-395 the chain is Cytoplasmic; sequence QGMVNSARFSSMNTLTLKDLPDTLASSGNSLLS. A helical membrane pass occupies residues 396 to 416; that stretch reads MIMQLSMSIGVTIAGMLLGMF. Residues 417–430 lie on the Periplasmic side of the membrane; the sequence is GQQHIGIDSSATHH. A helical transmembrane segment spans residues 431–451; the sequence is VFMYTWLCMAVIIALPAIIFA. The Cytoplasmic segment spans residues 452–470; it reads RVPNDTQQNMVISRRKRSL.

This sequence belongs to the major facilitator superfamily. TCR/Tet family.

It is found in the cell inner membrane. This is Putative multidrug resistance protein MdtD from Salmonella paratyphi B (strain ATCC BAA-1250 / SPB7).